Reading from the N-terminus, the 404-residue chain is Cysteine desulfurase IscS (404 aa).

Pyridoxal 5'-phosphate-binding positions include A75–T76, N155, Q183, and S203–H205. N6-(pyridoxal phosphate)lysine is present on K206. Pyridoxal 5'-phosphate is bound at residue T243. C328 acts as the Cysteine persulfide intermediate in catalysis. A [2Fe-2S] cluster-binding site is contributed by C328.

It belongs to the class-V pyridoxal-phosphate-dependent aminotransferase family. NifS/IscS subfamily. In terms of assembly, homodimer. Forms a heterotetramer with IscU, interacts with other sulfur acceptors. Pyridoxal 5'-phosphate serves as cofactor.

The protein resides in the cytoplasm. The catalysed reaction is (sulfur carrier)-H + L-cysteine = (sulfur carrier)-SH + L-alanine. Its pathway is cofactor biosynthesis; iron-sulfur cluster biosynthesis. In terms of biological role, master enzyme that delivers sulfur to a number of partners involved in Fe-S cluster assembly, tRNA modification or cofactor biosynthesis. Catalyzes the removal of elemental sulfur atoms from cysteine to produce alanine. Functions as a sulfur delivery protein for Fe-S cluster synthesis onto IscU, an Fe-S scaffold assembly protein, as well as other S acceptor proteins. The chain is Cysteine desulfurase IscS from Pseudomonas aeruginosa (strain UCBPP-PA14).